A 185-amino-acid chain; its full sequence is Fimbrial subunit type 1 (185 aa).

The N-terminal stretch at 1-22 (MRHKLMTSTIASLMFVAAAAVA) is a signal peptide. The cysteines at positions 46 and 86 are disulfide-linked.

This sequence belongs to the fimbrial protein family.

The protein localises to the fimbrium. In Salmonella typhimurium, this protein is Fimbrial subunit type 1.